The following is a 173-amino-acid chain: Adenine phosphoribosyltransferase (173 aa).

Belongs to the purine/pyrimidine phosphoribosyltransferase family. Homodimer.

Its subcellular location is the cytoplasm. The catalysed reaction is AMP + diphosphate = 5-phospho-alpha-D-ribose 1-diphosphate + adenine. It participates in purine metabolism; AMP biosynthesis via salvage pathway; AMP from adenine: step 1/1. Functionally, catalyzes a salvage reaction resulting in the formation of AMP, that is energically less costly than de novo synthesis. This chain is Adenine phosphoribosyltransferase, found in Thermoanaerobacter sp. (strain X514).